We begin with the raw amino-acid sequence, 206 residues long: Small ribosomal subunit protein uS5 (206 aa).

Residues 1–15 (MTDTPTKQETQSNKD) are compositionally biased toward polar residues. A disordered region spans residues 1–50 (MTDTPTKQETQSNKDNVPGAIPVEQKKNNRNDRKRNRRGDSKNLERDSDW). The span at 38-50 (RGDSKNLERDSDW) shows a compositional bias: basic and acidic residues. Positions 50–113 (WQERVVQIRR…SDGKKNLVRV (64 aa)) constitute an S5 DRBM domain.

Belongs to the universal ribosomal protein uS5 family. As to quaternary structure, part of the 30S ribosomal subunit. Contacts proteins S4 and S8.

In terms of biological role, with S4 and S12 plays an important role in translational accuracy. Located at the back of the 30S subunit body where it stabilizes the conformation of the head with respect to the body. This is Small ribosomal subunit protein uS5 from Prochlorococcus marinus (strain MIT 9215).